The primary structure comprises 565 residues: MNMLIKRVIAIKNPRGDDNNNNKLSDLETLTDKCTTCPLTLMRVMAFFVVSFMLFSVLFSLSVVLRDPPSDAAISSTTTLFQLNQGLGSDDFDSVELLNDKLLGGLLADGFDEKSCLSRYQSAIFGKGLSGKPSSYLISRLRKYEARHKQCGPYTESYNKTVKELGSGQFSESVDCKYVVWISFSGLGNRILTLVSAFLYALLTDRVLLVDPGVDMTDLFCEPFPDASWFVPPDFPLNSHLNNFNQESNQCHGKILKTKSITNSTVPSFVYLHLAHDYDDHDKLFFCDEEQLFLQNVPLLIMKTDNYFIPSLFLMPSFEQELNDLFPKKEKVFHFLGRYLLHPTNNVWGLVVRYYDAYLAKVDERIGIQIRVFDTDPGPFQHVLDQVLACTLKESILPDVNREQNINSSSGTPKSKAVLITSLSSGYFEKVRDMYWEFPTETGEVVGIYQPSHEGYQQTQKQFHNQKAWAEMYLLSLTDVLVTSSWSTFGYVAQGLGGLKPWILYKPENRTAPNPPCQRAMSMEPCFHAPPFYDCKAKRGTDTGALVPHVRHCEDMSWGLKLVDN.

Residues methionine 1–arginine 43 are Cytoplasmic-facing. A helical; Signal-anchor for type II membrane protein transmembrane segment spans residues valine 44 to valine 64. At leucine 65 to asparagine 565 the chain is on the lumenal side. N-linked (GlcNAc...) asparagine glycosylation is found at asparagine 159, asparagine 263, asparagine 407, and asparagine 509.

Belongs to the glycosyltransferase 37 family.

The protein resides in the golgi apparatus. It is found in the golgi stack membrane. The protein operates within protein modification; protein glycosylation. Involved in cell wall biosynthesis. Adds the terminal fucosyl residue on xyloglucan side chains. The polypeptide is Galactoside 2-alpha-L-fucosyltransferase (FT1) (Pisum sativum (Garden pea)).